The chain runs to 189 residues: Pyridoxal 5'-phosphate synthase subunit PdxT (189 aa).

47 to 49 provides a ligand contact to L-glutamine; it reads GES. C79 serves as the catalytic Nucleophile. Residues R106 and 135 to 136 contribute to the L-glutamine site; that span reads IR. Residues H171 and E173 each act as charge relay system in the active site.

The protein belongs to the glutaminase PdxT/SNO family. In terms of assembly, in the presence of PdxS, forms a dodecamer of heterodimers. Only shows activity in the heterodimer.

The catalysed reaction is aldehydo-D-ribose 5-phosphate + D-glyceraldehyde 3-phosphate + L-glutamine = pyridoxal 5'-phosphate + L-glutamate + phosphate + 3 H2O + H(+). It catalyses the reaction L-glutamine + H2O = L-glutamate + NH4(+). It participates in cofactor biosynthesis; pyridoxal 5'-phosphate biosynthesis. Functionally, catalyzes the hydrolysis of glutamine to glutamate and ammonia as part of the biosynthesis of pyridoxal 5'-phosphate. The resulting ammonia molecule is channeled to the active site of PdxS. This chain is Pyridoxal 5'-phosphate synthase subunit PdxT, found in Desulforudis audaxviator (strain MP104C).